The sequence spans 232 residues: Putative homeobox protein NANOG2 (232 aa).

Positions 1-39 (MDLPIQDSHDSSTSPKGKQPTTAEKSATKKEDKVPVKKQ) are disordered. Over residues 11–25 (SSTSPKGKQPTTAEK) the composition is skewed to polar residues. A compositionally biased stretch (basic and acidic residues) spans 26–35 (SATKKEDKVP). 8 tandem repeats follow at residues 123–127 (WSNQT), 128–132 (WNNST), 133–137 (WSNQT), 143–147 (WSNHS), 148–152 (WNTQT), 153–157 (WCTQS), 158–162 (WNNQA), and 163–167 (WNSPF). Residues 123–167 (WSNQTWNNSTWSNQTQNIQSWSNHSWNTQTWCTQSWNNQAWNSPF) are 8 X repeats starting with a Trp in each unit. Residues 123–167 (WSNQTWNNSTWSNQTQNIQSWSNHSWNTQTWCTQSWNNQAWNSPF) form a sufficient for transactivation activity region. The tract at residues 168 to 232 (YNCGEESLQS…YSTNMXXEDV (65 aa)) is sufficient for strong transactivation activity.

The protein belongs to the Nanog homeobox family.

It localises to the nucleus. Probable transcriptional regulator. In Pan paniscus (Pygmy chimpanzee), this protein is Putative homeobox protein NANOG2 (NANOGP1).